Reading from the N-terminus, the 256-residue chain is Pimeloyl-[acyl-carrier protein] methyl ester esterase (256 aa).

Residues 15–242 form the AB hydrolase-1 domain; sequence HLVLLHGWGL…AAHAPFISHP (228 aa). Substrate-binding positions include W22, 82 to 83, and 143 to 147; these read SL and FLALQ. S82 functions as the Nucleophile in the catalytic mechanism. Catalysis depends on residues D207 and H235. Substrate is bound at residue H235.

This sequence belongs to the AB hydrolase superfamily. Carboxylesterase BioH family. In terms of assembly, monomer.

It is found in the cytoplasm. It carries out the reaction 6-carboxyhexanoyl-[ACP] methyl ester + H2O = 6-carboxyhexanoyl-[ACP] + methanol + H(+). It functions in the pathway cofactor biosynthesis; biotin biosynthesis. Functionally, the physiological role of BioH is to remove the methyl group introduced by BioC when the pimeloyl moiety is complete. It allows to synthesize pimeloyl-ACP via the fatty acid synthetic pathway through the hydrolysis of the ester bonds of pimeloyl-ACP esters. The chain is Pimeloyl-[acyl-carrier protein] methyl ester esterase from Escherichia coli O139:H28 (strain E24377A / ETEC).